A 1102-amino-acid chain; its full sequence is Protein MMS22-like (1102 aa).

The protein belongs to the MMS22 family. MMS22L subfamily.

It localises to the nucleus. It is found in the chromosome. Involved in recombination-dependent repair of stalled or collapsed replication forks. The sequence is that of Protein MMS22-like from Drosophila melanogaster (Fruit fly).